The chain runs to 430 residues: Probable sugar isomerase R00627 (430 aa).

Residues His257, Asp289, and Asp291 each contribute to the Mn(2+) site.

The protein belongs to the rhamnose isomerase family. The cofactor is Mn(2+).

In Rhizobium meliloti (strain 1021) (Ensifer meliloti), this protein is Probable sugar isomerase R00627.